Here is a 211-residue protein sequence, read N- to C-terminus: tRNA (guanine-N(7)-)-methyltransferase (211 aa).

Positions 43, 68, 95, and 117 each coordinate S-adenosyl-L-methionine. D117 is a catalytic residue. Residues K121, D153, and 190 to 193 (TEYE) contribute to the substrate site.

This sequence belongs to the class I-like SAM-binding methyltransferase superfamily. TrmB family.

It catalyses the reaction guanosine(46) in tRNA + S-adenosyl-L-methionine = N(7)-methylguanosine(46) in tRNA + S-adenosyl-L-homocysteine. The protein operates within tRNA modification; N(7)-methylguanine-tRNA biosynthesis. Functionally, catalyzes the formation of N(7)-methylguanine at position 46 (m7G46) in tRNA. This is tRNA (guanine-N(7)-)-methyltransferase from Staphylococcus saprophyticus subsp. saprophyticus (strain ATCC 15305 / DSM 20229 / NCIMB 8711 / NCTC 7292 / S-41).